The chain runs to 306 residues: Ribosomal RNA small subunit methyltransferase H (306 aa).

Residues 33 to 35, Asp-51, Phe-78, Asp-96, and Gln-103 contribute to the S-adenosyl-L-methionine site; that span reads GGY.

The protein belongs to the methyltransferase superfamily. RsmH family.

It is found in the cytoplasm. The catalysed reaction is cytidine(1402) in 16S rRNA + S-adenosyl-L-methionine = N(4)-methylcytidine(1402) in 16S rRNA + S-adenosyl-L-homocysteine + H(+). Functionally, specifically methylates the N4 position of cytidine in position 1402 (C1402) of 16S rRNA. This Rickettsia typhi (strain ATCC VR-144 / Wilmington) protein is Ribosomal RNA small subunit methyltransferase H.